A 356-amino-acid chain; its full sequence is L-Ala-D/L-Glu epimerase (356 aa).

Residue 161-163 (KVK) participates in substrate binding. The Mg(2+) site is built by Asp-191, Glu-219, and Asp-244. Residues Lys-268 and 320 to 322 (DLD) each bind substrate.

The protein belongs to the mandelate racemase/muconate lactonizing enzyme family. Mg(2+) serves as cofactor.

The enzyme catalyses L-alanyl-L-glutamate = L-alanyl-D-glutamate. In terms of biological role, dipeptide epimerase with a preference for substrates containing a Glu residue in the second position. Catalyzes the epimerization of L-Ala-L-Glu, L-Ser-L-Glu, L-Thr-L-Glu, L-Val-L-Glu, L-Gly-L-Glu and L-Thr-L-Glu (in vitro). May play a role in the metabolism of the murein peptide, of which L-Ala-D-Glu is a component. This is L-Ala-D/L-Glu epimerase from Francisella tularensis subsp. novicida (strain U112).